Here is a 1372-residue protein sequence, read N- to C-terminus: MAQQTFTGRKRVRKFFGHIKEVAEMPNLIEVQKASYDQFLMVDEPTGGRPDEGLQAVFRSVFPISDFSGTSMLEFVRYEFEPPKYDVDECRQRGMTFAAPLKVTLRLIVFDIDEETGAKSVKDIKEQDVYMGDIPLMTMNGTFIVNGTERVIVSQMHRSPGVFFDHDKGKTHSSGKLLFAARVIPYRGSWLDIEFDAKDIVFARIDRRRKIPVTSLMFALGLDGEQILSTFYKKLIYKRIKEGWRVPFDANRFRGYSTVNDLIDADTGKVVLEAGKKLTVRTARQLQEKGLKALRMSDEELLGNYIAEDLVNPKTGEIYAEAGEEITDKLFKVLNEQGYKDLPLLDIDHVNVGPYIRNTLSADKNMTREDALFDIYRVMRPGEPPTLDSAQAMFQSLFFDAERYDLSAVGRVKMNMRLELDAPDTQRTLRKEDILAVIKTLVDLRDGKGEIDDIDHLGNRRVRSVGELMENQYRIGLLRMERAIKERMSSVDIDTVMPQDLINAKPAAAAVREFFGSSQLSQFMDQTNPLSEITHKRRLSALGPGGLTRERAGFEVRDVHPTHYGRICPIETPEGPNIGLINSLATFARVNKYGFVETPYRKVRDGRVTDEVVYLSAMEEGRYRVAQANVPLDAKGRFTEDLVVCRHAGEVVPMTPDKVDYMDVSPKQLVSVAAALIPFLENDDANRALMGSNMQRQAVPLVRAEAPFVGTGMEGVVARDSGAAIAARRSGVVDQIDATRVVIRATEDLDPTKSGVDIYRLMKFQRSNQSTCINQRPLVKVGDIVKKGDIIADGPSTDLGELALGRNVLVAFMPWNGYNFEDSILLSERIVKEDVFTSIHIEEFEVMARDTKLGPEEITRDIPNVSEEALKNLDEAGIVYIGAEVRAGDILVGKITPKGESPMTPEEKLLRAIFGEKASDVRDTSLRVPPGVQGTIVEVRVFNRHGVDKDERALAIEREEIERLAKDRDDEQAILDRNVYSRLADMLDGRQGISGPKGFKKDTKITRAVLDEYPKSQWWLFASANDKLMAEIEAMRKQYDESKKGLEQRFLDKVEKLQRGDELPPGVMKMVKVFVAVKRKIQPGDKMAGRHGNKGVVSKIVPIEDMPFLEDGTHADIVLNPLGVPSRMNVGQILETHLGWACAGLGKRIAQTVDAYLSKQDVKPLKETLKRIYGEDETIKSLNDNELLELGHNLSRGVPIATPVFDGAKEADIEEMLKLAGMDASGQSTVYDGRTGDPFDRKVTVGYIYMLKLHHLVDDKIHARSIGPYSLVTQQPLGGKAQFGGQRFGEMEVWALEAYGAAYTLQEMLTVKSDDVAGRTKVYEAIVRGDDTFEAGIPESFNVLVKEMRSLGLNVDLHNSKLGPAPTSEAAE.

The protein belongs to the RNA polymerase beta chain family. As to quaternary structure, the RNAP catalytic core consists of 2 alpha, 1 beta, 1 beta' and 1 omega subunit. When a sigma factor is associated with the core the holoenzyme is formed, which can initiate transcription.

It carries out the reaction RNA(n) + a ribonucleoside 5'-triphosphate = RNA(n+1) + diphosphate. Functionally, DNA-dependent RNA polymerase catalyzes the transcription of DNA into RNA using the four ribonucleoside triphosphates as substrates. This is DNA-directed RNA polymerase subunit beta from Bradyrhizobium sp. (strain BTAi1 / ATCC BAA-1182).